A 300-amino-acid polypeptide reads, in one-letter code: MNTLVLKIDAILSKHLKKQLASYTISSQNTYVAFAAKKNGVTVLLYKSGKLVLQGNGANALAQELNLPVAKTVFEASNNSQDIPIIGSDEVGNGSYFGGIAVVASFVDPKDHSFLKKLGVDDSKKLSDKTIQQIAPLLEKQIPHQSLLLSPKKYNELVGKSKPYNAISIKVALHNQAIFLLLQKGIQPKQIVIDAFTSQSNYEKHLKKEKNHFPNPLTFQEKAESHYLAVAVSSIIARNLFLDNLDQLGQDLGYQLPSGAGSASDKVASQLLAAYGMSSLEYSAKLHFANTHKAQALLTK.

The 218-residue stretch at 83–300 folds into the RNase H type-2 domain; that stretch reads IPIIGSDEVG…THKAQALLTK (218 aa). Aspartate 89, glutamate 90, and aspartate 194 together coordinate a divalent metal cation.

It belongs to the RNase HII family. RnhC subfamily. Mn(2+) serves as cofactor. It depends on Mg(2+) as a cofactor.

The protein localises to the cytoplasm. The catalysed reaction is Endonucleolytic cleavage to 5'-phosphomonoester.. Endonuclease that specifically degrades the RNA of RNA-DNA hybrids. This is Ribonuclease HIII from Streptococcus pyogenes serotype M12 (strain MGAS2096).